A 210-amino-acid polypeptide reads, in one-letter code: Oxygen-insensitive NADPH nitroreductase (210 aa).

150 to 155 serves as a coordination point for NADP(+); that stretch reads GVSLMG.

The protein belongs to the nitroreductase family.

In terms of biological role, reduction of a variety of nitroaromatic compounds using NADPH as source of reducing equivalents; two electrons are transferred. The sequence is that of Oxygen-insensitive NADPH nitroreductase (rdxA) from Helicobacter acinonychis (strain Sheeba).